The primary structure comprises 592 residues: Bifunctional purine biosynthesis protein ATIC (592 aa).

An N-acetylmethionine modification is found at methionine 1. An MGS-like domain is found at methionine 1–cysteine 146. Residues methionine 1–serine 198 form an IMP cyclohydrolase region. Residues serine 12–lysine 14, serine 34–threonine 37, arginine 64–threonine 67, cysteine 101–asparagine 102, and aspartate 125–isoleucine 126 contribute to the IMP site. Residue lysine 137 is the Proton donor/acceptor; for FAICAR cyclization activity of the active site. Lysine 199 is subject to N6-acetyllysine. The segment at lysine 199–histidine 592 is AICAR formyltransferase. Residues arginine 207–tyrosine 208, histidine 267, glycine 316, aspartate 339, asparagine 431, and arginine 451 contribute to the 5-amino-1-(5-phospho-beta-D-ribosyl)imidazole-4-carboxamide site. The active-site Proton acceptor; for AICAR formyltransferase activity is histidine 267. Isoleucine 452 serves as a coordination point for (6R)-10-formyltetrahydrofolate. Phenylalanine 541 is a binding site for 5-amino-1-(5-phospho-beta-D-ribosyl)imidazole-4-carboxamide. (6R)-10-formyltetrahydrofolate-binding positions include aspartate 546 and serine 565–threonine 566. Arginine 588 contributes to the 5-amino-1-(5-phospho-beta-D-ribosyl)imidazole-4-carboxamide binding site.

The protein belongs to the PurH family. As to quaternary structure, homodimer. Associates with internalized INSR complexes on Golgi/endosomal membranes. Interacts with INSR; ATIC together with PRKAA2/AMPK2 and HACD3/PTPLAD1 is proposed to be part of a signaling network regulating INSR autophosphorylation and endocytosis. Expressed in liver.

Its subcellular location is the cytoplasm. The protein resides in the cytosol. It carries out the reaction (6R)-10-formyltetrahydrofolate + 5-amino-1-(5-phospho-beta-D-ribosyl)imidazole-4-carboxamide = 5-formamido-1-(5-phospho-D-ribosyl)imidazole-4-carboxamide + (6S)-5,6,7,8-tetrahydrofolate. The catalysed reaction is 10-formyldihydrofolate + 5-amino-1-(5-phospho-beta-D-ribosyl)imidazole-4-carboxamide = 5-formamido-1-(5-phospho-D-ribosyl)imidazole-4-carboxamide + 7,8-dihydrofolate. It catalyses the reaction IMP + H2O = 5-formamido-1-(5-phospho-D-ribosyl)imidazole-4-carboxamide. It functions in the pathway purine metabolism; IMP biosynthesis via de novo pathway; 5-formamido-1-(5-phospho-D-ribosyl)imidazole-4-carboxamide from 5-amino-1-(5-phospho-D-ribosyl)imidazole-4-carboxamide (10-formyl THF route): step 1/1. It participates in purine metabolism; IMP biosynthesis via de novo pathway; IMP from 5-formamido-1-(5-phospho-D-ribosyl)imidazole-4-carboxamide: step 1/1. AMP and XMP inhibit AICAR formyltransferase activity. In terms of biological role, bifunctional enzyme that catalyzes the last two steps of purine biosynthesis. Acts as a transformylase that incorporates a formyl group to the AMP analog AICAR (5-amino-1-(5-phospho-beta-D-ribosyl)imidazole-4-carboxamide) to produce the intermediate formyl-AICAR (FAICAR). Can use both 10-formyldihydrofolate and 10-formyltetrahydrofolate as the formyl donor in this reaction. Also catalyzes the cyclization of FAICAR to inosine monophosphate (IMP). Promotes insulin receptor/INSR autophosphorylation and is involved in INSR internalization. This Rattus norvegicus (Rat) protein is Bifunctional purine biosynthesis protein ATIC (Atic).